The chain runs to 168 residues: Protein B-Myc (168 aa).

Disordered stretches follow at residues 26 to 94 (DDEE…DLPE) and 146 to 168 (EGASVSPAADVEPATPPDCTCNT). Residues Ser59 and Ser67 each carry the phosphoserine modification.

The protein localises to the nucleus. Functionally, seems to act as an inhibitor of cellular proliferation. This chain is Protein B-Myc (Mycb), found in Rattus norvegicus (Rat).